A 460-amino-acid polypeptide reads, in one-letter code: MAANVQTSSLLFLVFLLLQNFYSANSQSFLGVNYGQLSDNLPSLQATVNLLKSTTIQKVRLFGAEPAVIKAFANTGVEIVIGFDNGDIPTLASNPNVASQFVKSNVMSFYPASNIIAITVGNEVLTSGDQKLISQLLPAMQNVQNALNAASLGGKVKVSTVHAMAVLSQSYPPSSGVFNPGLGDTMKALLQFQSANDAPFMISPYPYFAYKNQPTPDTLAFCLFQPNAGQVDSGNGHKYTNMFDAQVDAVHSALNAMGFKDIEIVVAETGWPHGGDSNEVGPSLDNAKAYVGNLINHLKSKVGTPLMPGKSIDTYLFSLYDEDKKTGASSEKYFGLFKPDGSTTYDVGLLKNTQNPTTPATPTPTPKAAGSWCVPKPGVSDDQLTGNINYACGQGIDCGPIQPGGACFEPNTVKAHAAYVMNLYYQSAGRNSWNCDFSQTATLTNTNPSYGACNFPSGSN.

A signal peptide spans 1-26; it reads MAANVQTSSLLFLVFLLLQNFYSANS. The active-site Proton donor is Glu123. The active-site Nucleophile is the Glu268. The interval 352–371 is disordered; sequence NTQNPTTPATPTPTPKAAGS. Asn355 carries N-linked (GlcNAc...) asparagine glycosylation. Cysteines 373 and 435 form a disulfide. Residue Asn447 is glycosylated (N-linked (GlcNAc...) asparagine).

Belongs to the glycosyl hydrolase 17 family. As to quaternary structure, homodimer. Post-translationally, glycosylated. In terms of processing, contains two additional disulfide bonds, but it is unclear if they are between the pairs Cys-392-Cys-398 and Cys-407-Cys-453 (PudMed:18096638) or between the pairs Cys-392-Cys-453 and Cys-398-Cys-407 (PudMed:12392450). In terms of tissue distribution, expressed only in pollen.

It localises to the secreted. The catalysed reaction is Hydrolysis of (1-&gt;3)-beta-D-glucosidic linkages in (1-&gt;3)-beta-D-glucans.. This Olea europaea (Common olive) protein is Glucan endo-1,3-beta-D-glucosidase (OLE9).